A 289-amino-acid polypeptide reads, in one-letter code: Glycine--tRNA ligase alpha subunit (289 aa).

Belongs to the class-II aminoacyl-tRNA synthetase family. Tetramer of two alpha and two beta subunits.

The protein localises to the cytoplasm. It carries out the reaction tRNA(Gly) + glycine + ATP = glycyl-tRNA(Gly) + AMP + diphosphate. The sequence is that of Glycine--tRNA ligase alpha subunit from Rickettsia typhi (strain ATCC VR-144 / Wilmington).